Reading from the N-terminus, the 161-residue chain is Large ribosomal subunit protein bL17 (161 aa).

Residues 132 to 144 show a composition bias toward basic and acidic residues; the sequence is ARAKRAEDNRKAL. Residues 132–161 form a disordered region; it reads ARAKRAEDNRKALEAQQAQAEAETTGETKA. Residues 145 to 161 show a composition bias toward low complexity; that stretch reads EAQQAQAEAETTGETKA.

This sequence belongs to the bacterial ribosomal protein bL17 family. Part of the 50S ribosomal subunit. Contacts protein L32.

This is Large ribosomal subunit protein bL17 from Koribacter versatilis (strain Ellin345).